The primary structure comprises 419 residues: Argininosuccinate synthase (419 aa).

Position 9-17 (Ala-9–Ser-17) interacts with ATP. Tyr-87 is a binding site for L-citrulline. Residue Gly-117 coordinates ATP. 3 residues coordinate L-aspartate: Thr-119, Asn-123, and Asp-124. Asn-123 serves as a coordination point for L-citrulline. L-citrulline is bound by residues Arg-127, Ser-175, Ser-184, Glu-260, and Tyr-272.

The protein belongs to the argininosuccinate synthase family. Type 1 subfamily. Homotetramer.

It localises to the cytoplasm. The catalysed reaction is L-citrulline + L-aspartate + ATP = 2-(N(omega)-L-arginino)succinate + AMP + diphosphate + H(+). It functions in the pathway amino-acid biosynthesis; L-arginine biosynthesis; L-arginine from L-ornithine and carbamoyl phosphate: step 2/3. The polypeptide is Argininosuccinate synthase (Brevibacillus brevis (strain 47 / JCM 6285 / NBRC 100599)).